The following is an 837-amino-acid chain: Putative dimethyl sulfoxide reductase catalytic subunit A (837 aa).

Positions 1-36 form a signal peptide, tat-type signal; sequence MSDTDLNATRRDVLKSGAVAAVGLSGGGLLSTLQEA. Residues 53 to 110 enclose the 4Fe-4S Mo/W bis-MGD-type domain; that stretch reads DQVVKTACSPNCRGKCPLDVFVRDGQIKKVEQQVPAAKTFKRGCTLGMTHLQRVYNAD. Residues C60, C64, C68, and C96 each coordinate [4Fe-4S] cluster. N200 contacts Mo-bis(molybdopterin guanine dinucleotide). The interval 813–837 is disordered; that stretch reads EHQSNEYTQHNPRGSSGTATDGDSS. Residues 826 to 837 show a composition bias toward low complexity; that stretch reads GSSGTATDGDSS.

It belongs to the prokaryotic molybdopterin-containing oxidoreductase family. In terms of assembly, probable multiprotein complex that likely consists of DmsA, DmsB and DmsC. Mo-bis(molybdopterin guanine dinucleotide) serves as cofactor. It depends on [4Fe-4S] cluster as a cofactor. In terms of processing, predicted to be exported by the Tat system. The position of the signal peptide cleavage has not been experimentally proven.

The protein resides in the cell membrane. It catalyses the reaction dimethyl sulfide + a menaquinone + H2O = dimethyl sulfoxide + a menaquinol. Dimethyl sulfoxide (DMSO) reductase catalyzes the reduction of dimethyl sulfoxide (DMSO) to dimethyl sulfide (DMS) during anaerobic respiration; it can also use trimethylamine N-oxide (TMAO) as terminal electron acceptor. Required for anaerobic respiration on DMSO and TMAO; subunit A is proposed to be catalytically active. This Halobacterium salinarum (strain ATCC 700922 / JCM 11081 / NRC-1) (Halobacterium halobium) protein is Putative dimethyl sulfoxide reductase catalytic subunit A (dmsA).